We begin with the raw amino-acid sequence, 222 residues long: Eukaryotic translation initiation factor 3 subunit K (222 aa).

The 163-residue stretch at 46–208 (YDLEANLAVL…KIKTKNITEK (163 aa)) folds into the PCI domain.

It belongs to the eIF-3 subunit K family. As to quaternary structure, component of the eukaryotic translation initiation factor 3 (eIF-3) complex. The eIF-3 complex interacts with pix.

Its subcellular location is the cytoplasm. Component of the eukaryotic translation initiation factor 3 (eIF-3) complex, which is involved in protein synthesis of a specialized repertoire of mRNAs and, together with other initiation factors, stimulates binding of mRNA and methionyl-tRNAi to the 40S ribosome. The eIF-3 complex specifically targets and initiates translation of a subset of mRNAs involved in cell proliferation. The polypeptide is Eukaryotic translation initiation factor 3 subunit K (Drosophila yakuba (Fruit fly)).